We begin with the raw amino-acid sequence, 460 residues long: TNF receptor-associated factor family protein DDB_G0290883 (460 aa).

The RING-type; degenerate zinc finger occupies 27–67 (CPICFEFIYKKQIYQCKSGHHACKECWEKSLETKKECMTCK). 2 TRAF-type zinc fingers span residues 141–194 (SHLI…KKEL) and 196–253 (THYK…SELQ). The region spanning 320 to 448 (GYRNKWIISN…DDKLTIEIYI (129 aa)) is the MATH domain.

This sequence belongs to the TNF receptor-associated factor family. A subfamily.

It is found in the cytoplasm. Its function is as follows. Probable adapter protein and signal transducer that links members of the tumor necrosis factor receptor family to different signaling pathways by association with the receptor cytoplasmic domain and kinases. This Dictyostelium discoideum (Social amoeba) protein is TNF receptor-associated factor family protein DDB_G0290883.